A 466-amino-acid chain; its full sequence is Asparagine--tRNA ligase (466 aa).

Belongs to the class-II aminoacyl-tRNA synthetase family. As to quaternary structure, homodimer.

The protein localises to the cytoplasm. It carries out the reaction tRNA(Asn) + L-asparagine + ATP = L-asparaginyl-tRNA(Asn) + AMP + diphosphate + H(+). The protein is Asparagine--tRNA ligase of Salmonella typhimurium (strain LT2 / SGSC1412 / ATCC 700720).